Consider the following 365-residue polypeptide: Guanine nucleotide-binding protein alpha-6 subunit (365 aa).

Gly2 carries the N-myristoyl glycine lipid modification. The G-alpha domain maps to 42–364 (NRFKILLLGT…NENLRSAGLH (323 aa)). Residues 45–58 (KILLLGTAESGKST) form a G1 motif region. GTP is bound by residues 50-57 (GTAESGKS), 187-193 (VHCRIST), 212-216 (DVGGQ), 281-284 (NKYD), and Ala336. Positions 57 and 193 each coordinate Mg(2+). Positions 185–193 (DIVHCRIST) are G2 motif. A G3 motif region spans residues 208–217 (FKMVDVGGQR). Residues 277–284 (VLFLNKYD) form a G4 motif region. The tract at residues 334-339 (TTATDT) is G5 motif.

It belongs to the G-alpha family. G proteins are composed of 3 units; alpha, beta and gamma. The alpha chain contains the guanine nucleotide binding site.

In terms of biological role, guanine nucleotide-binding proteins (G proteins) are involved as modulators or transducers in various transmembrane signaling systems. The polypeptide is Guanine nucleotide-binding protein alpha-6 subunit (gpa-6) (Caenorhabditis briggsae).